We begin with the raw amino-acid sequence, 396 residues long: Ornithine aminotransferase 2 (396 aa).

The residue at position 255 (K255) is an N6-(pyridoxal phosphate)lysine.

This sequence belongs to the class-III pyridoxal-phosphate-dependent aminotransferase family. OAT subfamily. Pyridoxal 5'-phosphate serves as cofactor.

It localises to the cytoplasm. The enzyme catalyses a 2-oxocarboxylate + L-ornithine = L-glutamate 5-semialdehyde + an L-alpha-amino acid. Its pathway is amino-acid biosynthesis; L-proline biosynthesis; L-glutamate 5-semialdehyde from L-ornithine: step 1/1. Functionally, catalyzes the interconversion of ornithine to glutamate semialdehyde. This Staphylococcus saprophyticus subsp. saprophyticus (strain ATCC 15305 / DSM 20229 / NCIMB 8711 / NCTC 7292 / S-41) protein is Ornithine aminotransferase 2.